Reading from the N-terminus, the 141-residue chain is Endoribonuclease YbeY (141 aa).

The Zn(2+) site is built by His105, His109, and Asp115.

It belongs to the endoribonuclease YbeY family. Requires Zn(2+) as cofactor.

The protein localises to the cytoplasm. Functionally, single strand-specific metallo-endoribonuclease involved in late-stage 70S ribosome quality control and in maturation of the 3' terminus of the 16S rRNA. The sequence is that of Endoribonuclease YbeY from Chloroherpeton thalassium (strain ATCC 35110 / GB-78).